A 146-amino-acid polypeptide reads, in one-letter code: Large ribosomal subunit protein uL15 (146 aa).

Residues 1–56 (MKLHELKAAEGANKASKRVGRGTGSGLGKTSGKGQNGQNSRSGGGVRPGFEGGQMP) are disordered. 2 stretches are compositionally biased toward gly residues: residues 21–35 (RGTG…GKGQ) and 42–52 (SGGGVRPGFEG).

Belongs to the universal ribosomal protein uL15 family. As to quaternary structure, part of the 50S ribosomal subunit.

Functionally, binds to the 23S rRNA. The protein is Large ribosomal subunit protein uL15 of Clostridium botulinum (strain Langeland / NCTC 10281 / Type F).